The chain runs to 463 residues: ATP-dependent protease ATPase subunit HslU (463 aa).

Residues Ile19, 61–66 (GVGKTE), Asp277, Glu341, and Arg413 each bind ATP.

It belongs to the ClpX chaperone family. HslU subfamily. A double ring-shaped homohexamer of HslV is capped on each side by a ring-shaped HslU homohexamer. The assembly of the HslU/HslV complex is dependent on binding of ATP.

The protein localises to the cytoplasm. Functionally, ATPase subunit of a proteasome-like degradation complex; this subunit has chaperone activity. The binding of ATP and its subsequent hydrolysis by HslU are essential for unfolding of protein substrates subsequently hydrolyzed by HslV. HslU recognizes the N-terminal part of its protein substrates and unfolds these before they are guided to HslV for hydrolysis. This is ATP-dependent protease ATPase subunit HslU from Bacillus cereus (strain B4264).